A 737-amino-acid polypeptide reads, in one-letter code: Dual specificity protein kinase KNS1 (737 aa).

Disordered stretches follow at residues 1 to 33 (MSQN…SSNK) and 270 to 290 (SSLR…NKSN). Positions 15-33 (ANMNNSTTTGPANNTSSNK) are enriched in polar residues. A compositionally biased stretch (low complexity) spans 277 to 290 (SNGSSESASSNKSN). Positions 313 to 720 (FVVKDLLGQG…AKDALDHEWF (408 aa)) constitute a Protein kinase domain. ATP-binding positions include 319–327 (LGQGTFGKV) and Lys343. The Proton acceptor role is filled by Asp440. Thr562 bears the Phosphothreonine mark.

Belongs to the protein kinase superfamily. CMGC Ser/Thr protein kinase family. Lammer subfamily. Phosphorylated (auto-) on Ser/Thr/Tyr.

The catalysed reaction is L-seryl-[protein] + ATP = O-phospho-L-seryl-[protein] + ADP + H(+). It catalyses the reaction L-threonyl-[protein] + ATP = O-phospho-L-threonyl-[protein] + ADP + H(+). The enzyme catalyses L-tyrosyl-[protein] + ATP = O-phospho-L-tyrosyl-[protein] + ADP + H(+). Functionally, nonessential protein kinase. The sequence is that of Dual specificity protein kinase KNS1 (KNS1) from Saccharomyces cerevisiae (strain ATCC 204508 / S288c) (Baker's yeast).